Here is a 474-residue protein sequence, read N- to C-terminus: Glutamate--tRNA ligase (474 aa).

Positions Pro11 to Gly21 match the 'HIGH' region motif. A 'KMSKS' region motif is present at residues Lys240–Arg244. Lys243 lines the ATP pocket.

The protein belongs to the class-I aminoacyl-tRNA synthetase family. Glutamate--tRNA ligase type 1 subfamily. Monomer.

The protein resides in the cytoplasm. The catalysed reaction is tRNA(Glu) + L-glutamate + ATP = L-glutamyl-tRNA(Glu) + AMP + diphosphate. Catalyzes the attachment of glutamate to tRNA(Glu) in a two-step reaction: glutamate is first activated by ATP to form Glu-AMP and then transferred to the acceptor end of tRNA(Glu). This is Glutamate--tRNA ligase from Bradyrhizobium sp. (strain BTAi1 / ATCC BAA-1182).